The following is a 345-amino-acid chain: tRNA-dihydrouridine(20/20a) synthase (345 aa).

Residues 26–28 and Gln-78 each bind FMN; that span reads PML. Cys-108 acts as the Proton donor in catalysis. FMN-binding positions include Lys-147, His-180, 220-222, and 242-243; these read NGG and GR.

Belongs to the Dus family. DusA subfamily. FMN is required as a cofactor.

It catalyses the reaction 5,6-dihydrouridine(20) in tRNA + NADP(+) = uridine(20) in tRNA + NADPH + H(+). It carries out the reaction 5,6-dihydrouridine(20) in tRNA + NAD(+) = uridine(20) in tRNA + NADH + H(+). The enzyme catalyses 5,6-dihydrouridine(20a) in tRNA + NADP(+) = uridine(20a) in tRNA + NADPH + H(+). The catalysed reaction is 5,6-dihydrouridine(20a) in tRNA + NAD(+) = uridine(20a) in tRNA + NADH + H(+). Functionally, catalyzes the synthesis of 5,6-dihydrouridine (D), a modified base found in the D-loop of most tRNAs, via the reduction of the C5-C6 double bond in target uridines. Specifically modifies U20 and U20a in tRNAs. This is tRNA-dihydrouridine(20/20a) synthase from Yersinia pestis.